Consider the following 255-residue polypeptide: Tritrans,polycis-undecaprenyl-diphosphate synthase (geranylgeranyl-diphosphate specific) (255 aa).

Asp-34 is an active-site residue. Residue Asp-34 participates in Mg(2+) binding. Substrate is bound by residues 35-38 (GNRR), His-51, and 79-81 (STE). The Proton acceptor role is filled by Asn-82. Substrate contacts are provided by residues Phe-83, Arg-85, Arg-204, and 210-212 (RIS). Glu-223 provides a ligand contact to Mg(2+).

This sequence belongs to the UPP synthase family. As to quaternary structure, homodimer. It depends on Mg(2+) as a cofactor.

It carries out the reaction geranylgeranyl diphosphate + 7 isopentenyl diphosphate = tri-trans,hepta-cis-undecaprenyl diphosphate + 7 diphosphate. In terms of biological role, catalyzes the sequential condensation of isopentenyl diphosphate (IPP) with geranylgeranyl diphosphate (GGPP) to yield (2Z,6Z,10Z,14Z,18Z,22Z,26Z,30E,34E,38E)-undecaprenyl diphosphate (tritrans,heptacis-UPP). It is probably the precursor of glycosyl carrier lipids. This chain is Tritrans,polycis-undecaprenyl-diphosphate synthase (geranylgeranyl-diphosphate specific), found in Picrophilus torridus (strain ATCC 700027 / DSM 9790 / JCM 10055 / NBRC 100828 / KAW 2/3).